The following is a 333-amino-acid chain: MRLDQIFATLFNNQPLTQEQSAEFFRAVVNGEVAPEQLSAALIALKLRGETIDEIAGAVTALLTAAQPFPAPDYPFADIVGTGGDGANTINISTASAIVGASLGLKIAKHGNRSVSSKTGASDLLSCLGVDINMSAENARQALDEIGLAFVFAQKYHTGFKHAVPVRQALKTRTIFNILGPLINPAHAKRQLLGVYSPELLKPYAQTNARLNREHSIIVHGSGLDEVAIHGKTQVAELRDGKIEYYELSPQDFGFDVKPLENLRGGEPRENAEIITALLQGRGTDEQNQAVAMNTALLMKLFGHENIKQNAEQVLAQLASGRAFDTLVKLTAY.

5-phospho-alpha-D-ribose 1-diphosphate-binding positions include Gly-81, 84-85 (GD), Thr-89, 91-94 (NIST), 109-117 (KHGNRSVSS), and Ala-121. Gly-81 lines the anthranilate pocket. Ser-93 serves as a coordination point for Mg(2+). Asn-112 lines the anthranilate pocket. Residue Arg-167 participates in anthranilate binding. Mg(2+) contacts are provided by Asp-225 and Glu-226.

Belongs to the anthranilate phosphoribosyltransferase family. In terms of assembly, homodimer. It depends on Mg(2+) as a cofactor.

The catalysed reaction is N-(5-phospho-beta-D-ribosyl)anthranilate + diphosphate = 5-phospho-alpha-D-ribose 1-diphosphate + anthranilate. Its pathway is amino-acid biosynthesis; L-tryptophan biosynthesis; L-tryptophan from chorismate: step 2/5. Functionally, catalyzes the transfer of the phosphoribosyl group of 5-phosphorylribose-1-pyrophosphate (PRPP) to anthranilate to yield N-(5'-phosphoribosyl)-anthranilate (PRA). This chain is Anthranilate phosphoribosyltransferase, found in Actinobacillus succinogenes (strain ATCC 55618 / DSM 22257 / CCUG 43843 / 130Z).